The following is a 305-amino-acid chain: MIKQRTLKRIVQATGVGLHTGKKVTLTLRPAPANTGVIYRRTDLNPPVDFPADAKSVRDTMLCTCLVNEHDVRISTVEHLNAALAGLGIDNIVIEVNAPEIPIMDGSAAPFVYLLLDAGIDELNCAKKFVRIKETVRVEDGDKWAEFKPYNGFSLDFTIDFNHPAIDSSNQRYAMNFSADAFMRQISRARTFGFMRDIEYLQSRGLCLGGSFDCAIVVDDYRVLNEDGLRFEDEFVRHKMLDAIGDLFMCGHNIIGAFIAYKSGHALNNKLLQAVLAKQEAWEYVTFQDDAELPLAFKAPSAVLA.

Residues His-79, His-238, and Asp-242 each contribute to the Zn(2+) site. Residue His-265 is the Proton donor of the active site.

It belongs to the LpxC family. The cofactor is Zn(2+).

It carries out the reaction a UDP-3-O-[(3R)-3-hydroxyacyl]-N-acetyl-alpha-D-glucosamine + H2O = a UDP-3-O-[(3R)-3-hydroxyacyl]-alpha-D-glucosamine + acetate. It participates in glycolipid biosynthesis; lipid IV(A) biosynthesis; lipid IV(A) from (3R)-3-hydroxytetradecanoyl-[acyl-carrier-protein] and UDP-N-acetyl-alpha-D-glucosamine: step 2/6. Functionally, catalyzes the hydrolysis of UDP-3-O-myristoyl-N-acetylglucosamine to form UDP-3-O-myristoylglucosamine and acetate, the committed step in lipid A biosynthesis. This Shigella boydii serotype 18 (strain CDC 3083-94 / BS512) protein is UDP-3-O-acyl-N-acetylglucosamine deacetylase.